The chain runs to 513 residues: Cytochrome P450 monooxygenase sthF (513 aa).

2 helical membrane-spanning segments follow: residues 13–33 and 212–232; these read FPSL…YIFI and MLHP…IILL. Heme is bound at residue C452.

Belongs to the cytochrome P450 family. Requires heme as cofactor.

Its subcellular location is the membrane. It catalyses the reaction dehydroprobetaenone I + NADPH + O2 + H(+) = epoxybetaenone + NADP(+) + H2O. The enzyme catalyses dehydroprobetaenone I + 3 NADPH + 3 O2 + 3 H(+) = betaenone C + 3 NADP(+) + 3 H2O. The catalysed reaction is probetaenone I + 3 NADPH + 3 O2 + 3 H(+) = betaenone B + 3 NADP(+) + 3 H2O. The protein operates within mycotoxin biosynthesis. In terms of biological role, cytochrome P450 monooxygenase; part of the gene cluster that mediates the biosynthesis of the phytotoxin stemphyloxin II. The first step of the pathway is the synthesis of dehydroprobetaenone I by the polyketide synthase sthA and the enoyl reductase sthE via condensation of one acetyl-CoA starter unit with 7 malonyl-CoA units and 5 methylations. The C-terminal reductase (R) domain of sthA catalyzes the reductive release of the polyketide chain. Because sthA lacks a designated enoylreductase (ER) domain, the required activity is provided the enoyl reductase sthE. The short-chain dehydrogenase/reductase sthC then catalyzes reduction of dehydroprobetaenone I to probetaenone I. The cytochrome P450 monooxygenase sthF catalyzes successive epoxidation, oxidation (resulting from epoxide opening) and hydroxylation to install a tertiary alcohol in the decaline ring to yield betaenone C from dehydroprobetaenone I and betaenone B from probetaenone I. The FAD-linked oxidoreductase sthB is responsible for the conversion of betaenone C to betaenone A via an intramolecular aldol reaction between C-1 and C-17 to form the bridged tricyclic system in betaenone A. Finally, the cytochrome P450 monooxygenase sthD catalyzes the hydroxylation of C-15 to afford the final metabolite stemphyloxin II. The sequence is that of Cytochrome P450 monooxygenase sthF from Phaeosphaeria nodorum (strain SN15 / ATCC MYA-4574 / FGSC 10173) (Glume blotch fungus).